Consider the following 963-residue polypeptide: Kinesin-1 heavy chain (963 aa).

The residue at position 2 (Ala-2) is an N-acetylalanine. The region spanning 8 to 325 is the Kinesin motor domain; sequence NIKVMCRFRP…LLFGQRAKTI (318 aa). ATP is bound at residue 85–92; the sequence is GQTSSGKT. Lys-213 is covalently cross-linked (Glycyl lysine isopeptide (Lys-Gly) (interchain with G-Cter in SUMO2)). A coiled-coil region spans residues 329–914; it reads VCVNVELTAE…AVRSKNMARR (586 aa). The interval 908 to 963 is disordered; sequence SKNMARRGHSAQIAKPIRPGQHPAASPTHPGTVRGGGSFVQNNQPVGLRGGGGKQS. Positions 915–963 are globular; sequence GHSAQIAKPIRPGQHPAASPTHPGTVRGGGSFVQNNQPVGLRGGGGKQS. Ser-933 and Ser-945 each carry phosphoserine. The residue at position 956 (Arg-956) is an Omega-N-methylarginine.

Belongs to the TRAFAC class myosin-kinesin ATPase superfamily. Kinesin family. Kinesin subfamily. Oligomer composed of two heavy chains and two light chains. Interacts with GRIP1 and PPP1R42. Interacts with SYBU. Interacts with JAKMIP1. Interacts with PLEKHM2. Interacts with ECPAS. Interacts with ZFYVE27. Found in a complex with OGT, RHOT1, RHOT2 and TRAK1. Interacts with APP (via cytoplasmic domain).

Its subcellular location is the cytoplasm. The protein localises to the cytoskeleton. The protein resides in the cytolytic granule membrane. It localises to the lysosome membrane. In terms of biological role, microtubule-dependent motor required for normal distribution of mitochondria and lysosomes. May be involved in the mechanisms of growth arrest induced by exposure to DNA-damaging drugs or by cellular senescence. Can induce formation of neurite-like membrane protrusions in non-neuronal cells in a ZFYVE27-dependent manner. Regulates centrosome and nuclear positioning during mitotic entry. During the G2 phase of the cell cycle in a BICD2-dependent manner, antagonizes dynein function and drives the separation of nuclei and centrosomes. Required for anterograde axonal transportation of MAPK8IP3/JIP3 which is essential for MAPK8IP3/JIP3 function in axon elongation. Through binding with PLEKHM2 and ARL8B, directs lysosome movement toward microtubule plus ends. Involved in NK cell-mediated cytotoxicity. Drives the polarization of cytolytic granules and microtubule-organizing centers (MTOCs) toward the immune synapse between effector NK lymphocytes and target cells. In Mus musculus (Mouse), this protein is Kinesin-1 heavy chain (Kif5b).